The sequence spans 157 residues: MFDVLMYLFETYIHSDADVMVEQNELTDELSRAGFDKDEIEKALNWLERLANLHDSEREVYVAASAQGSMRIYAPQELARLGTECRGFLLFLEQAQVLNAETREICIERLLELDKPDIELDDLKWVVMMVLFNVPGSENAYQQMEELVFDESDGVIH.

This sequence belongs to the Smg family.

In Aeromonas salmonicida (strain A449), this protein is Protein Smg homolog.